The sequence spans 341 residues: Heat-inducible transcription repressor HrcA (341 aa).

This sequence belongs to the HrcA family.

In terms of biological role, negative regulator of class I heat shock genes (grpE-dnaK-dnaJ and groELS operons). Prevents heat-shock induction of these operons. In Symbiobacterium thermophilum (strain DSM 24528 / JCM 14929 / IAM 14863 / T), this protein is Heat-inducible transcription repressor HrcA.